The chain runs to 516 residues: MANEEQGSILKALDVAKTQWYHVTAVVVSGMGFFTDSYDLFVISLITKLLGRIYYQVPGSSSPGSLPDGISAAVSGVAFAGTFIGQIFFGCLGDKLGRKRVYGLTLLIMTICSICSGLSLGRDPKTVMVTLCFFRFWLGFGIGGDYPLSATIMSEYSNKRTRGAFIAAVFGMQGIGILAAGAVSLLVSAVFESKFPSRAYILDGAASTVPQADYVWRIILMVGALPALLTYYWRMKMPETARYTALVSKNAEQAALDMTKVLNVDIEASAAKNDQARVSSDEFGLFSMKFLRRHGLHLLGTASTWFLLDIAFYSQNLFQKDIFTTIGWLPSAKTMNAIQELYMIAKAQTIIACCSTVPGYFFTVGFIDYMGRKKIQIMGFAMMTIFMLSLAIPYHHWTLPANRIGFVVLYSFTFFFSNFGPNATTFIVPAEIFPARIRSTCHGISAASGKAGAMVGSFGFSALVKALGMSNTLYIMAGINLLGLLLTFTIPETNGKSLEELSGETEPEKIKEKIVV.

N-acetylalanine is present on Ala2. Topologically, residues 2-25 are cytoplasmic; the sequence is ANEEQGSILKALDVAKTQWYHVTA. Residues 26–46 traverse the membrane as a helical segment; sequence VVVSGMGFFTDSYDLFVISLI. Residues 47–71 lie on the Extracellular side of the membrane; sequence TKLLGRIYYQVPGSSSPGSLPDGIS. The helical transmembrane segment at 72-92 threads the bilayer; that stretch reads AAVSGVAFAGTFIGQIFFGCL. Residues 93–100 are Cytoplasmic-facing; that stretch reads GDKLGRKR. The chain crosses the membrane as a helical span at residues 101–121; that stretch reads VYGLTLLIMTICSICSGLSLG. At 122–132 the chain is on the extracellular side; that stretch reads RDPKTVMVTLC. The chain crosses the membrane as a helical span at residues 133 to 153; it reads FFRFWLGFGIGGDYPLSATIM. The Cytoplasmic portion of the chain corresponds to 154–162; it reads SEYSNKRTR. Residues 163–183 form a helical membrane-spanning segment; it reads GAFIAAVFGMQGIGILAAGAV. The Extracellular segment spans residues 184 to 212; the sequence is SLLVSAVFESKFPSRAYILDGAASTVPQA. A helical transmembrane segment spans residues 213 to 233; sequence DYVWRIILMVGALPALLTYYW. Over 234–293 the chain is Cytoplasmic; it reads RMKMPETARYTALVSKNAEQAALDMTKVLNVDIEASAAKNDQARVSSDEFGLFSMKFLRR. The helical transmembrane segment at 294–314 threads the bilayer; that stretch reads HGLHLLGTASTWFLLDIAFYS. The Extracellular portion of the chain corresponds to 315–349; that stretch reads QNLFQKDIFTTIGWLPSAKTMNAIQELYMIAKAQT. The chain crosses the membrane as a helical span at residues 350–370; the sequence is IIACCSTVPGYFFTVGFIDYM. Over 371 to 374 the chain is Cytoplasmic; that stretch reads GRKK. A helical transmembrane segment spans residues 375–395; that stretch reads IQIMGFAMMTIFMLSLAIPYH. Residues 396-403 are Extracellular-facing; that stretch reads HWTLPANR. Residues 404–424 form a helical membrane-spanning segment; that stretch reads IGFVVLYSFTFFFSNFGPNAT. Residues 425–442 lie on the Cytoplasmic side of the membrane; sequence TFIVPAEIFPARIRSTCH. A helical membrane pass occupies residues 443–463; it reads GISAASGKAGAMVGSFGFSAL. The Extracellular segment spans residues 464 to 471; that stretch reads VKALGMSN. The chain crosses the membrane as a helical span at residues 472-492; the sequence is TLYIMAGINLLGLLLTFTIPE. Residues 493–516 lie on the Cytoplasmic side of the membrane; sequence TNGKSLEELSGETEPEKIKEKIVV.

Belongs to the major facilitator superfamily. Phosphate:H(+) symporter (TC 2.A.1.9) family. As to expression, expressed in anthers, tapetumand mature pollen and, to a lower extent, in hydathodes and vascular tissues of cotyledons of flowering plants.

Its subcellular location is the membrane. In terms of biological role, high-affinity transporter for external inorganic phosphate. This chain is Probable inorganic phosphate transporter 1-6 (PHT1-6), found in Arabidopsis thaliana (Mouse-ear cress).